We begin with the raw amino-acid sequence, 490 residues long: Colicin-10 (490 aa).

Residues 1–20 (MDKVTDNSPDVESTESTEGS) show a composition bias toward polar residues. Disordered stretches follow at residues 1-29 (MDKVTDNSPDVESTESTEGSFPTVGVDTG) and 146-171 (QKAREEAEAAEKALREAERQRDEIAR). Residues 146–170 (QKAREEAEAAEKALREAERQRDEIA) are compositionally biased toward basic and acidic residues. The chain crosses the membrane as a helical span at residues 447–467 (IVALMFSFIVGAPLGFWGIAI).

This sequence belongs to the channel forming colicin family.

It localises to the host membrane. Functionally, this colicin is a channel-forming colicin. This class of transmembrane toxins depolarize the cytoplasmic membrane, leading to dissipation of cellular energy. Its function is as follows. Colicins are polypeptide toxins produced by and active against E.coli and closely related bacteria. The sequence is that of Colicin-10 (cta) from Escherichia coli.